Here is a 64-residue protein sequence, read N- to C-terminus: Large ribosomal subunit protein bL33c (64 aa).

This sequence belongs to the bacterial ribosomal protein bL33 family.

The protein resides in the plastid. It localises to the chloroplast. The sequence is that of Large ribosomal subunit protein bL33c (rpl33) from Trieres chinensis (Marine centric diatom).